Here is a 216-residue protein sequence, read N- to C-terminus: Holliday junction branch migration complex subunit RuvA (216 aa).

The interval Met1 to Lys64 is domain I. Residues Ser65 to Thr143 are domain II. The interval Ser144–Val163 is flexible linker. The domain III stretch occupies residues Leu164–Arg216.

The protein belongs to the RuvA family. Homotetramer. Forms an RuvA(8)-RuvB(12)-Holliday junction (HJ) complex. HJ DNA is sandwiched between 2 RuvA tetramers; dsDNA enters through RuvA and exits via RuvB. An RuvB hexamer assembles on each DNA strand where it exits the tetramer. Each RuvB hexamer is contacted by two RuvA subunits (via domain III) on 2 adjacent RuvB subunits; this complex drives branch migration. In the full resolvosome a probable DNA-RuvA(4)-RuvB(12)-RuvC(2) complex forms which resolves the HJ.

The protein resides in the cytoplasm. Its function is as follows. The RuvA-RuvB-RuvC complex processes Holliday junction (HJ) DNA during genetic recombination and DNA repair, while the RuvA-RuvB complex plays an important role in the rescue of blocked DNA replication forks via replication fork reversal (RFR). RuvA specifically binds to HJ cruciform DNA, conferring on it an open structure. The RuvB hexamer acts as an ATP-dependent pump, pulling dsDNA into and through the RuvAB complex. HJ branch migration allows RuvC to scan DNA until it finds its consensus sequence, where it cleaves and resolves the cruciform DNA. In Francisella tularensis subsp. novicida (strain U112), this protein is Holliday junction branch migration complex subunit RuvA.